The primary structure comprises 453 residues: Tubulin alpha-13 chain (453 aa).

Gln11 is a binding site for GTP. Residue Lys40 is modified to N6-acetyllysine. 7 residues coordinate GTP: Glu71, Ser140, Gly144, Thr145, Thr179, Asn206, and Asn228. Position 71 (Glu71) interacts with Mg(2+). Residue Glu254 is part of the active site. Residues 429–453 (EKDYEEVGTESQEGDGEEGEDGGDQ) are disordered. Residues 431–453 (DYEEVGTESQEGDGEEGEDGGDQ) show a composition bias toward acidic residues.

It belongs to the tubulin family. As to quaternary structure, dimer of alpha and beta chains. A typical microtubule is a hollow water-filled tube with an outer diameter of 25 nm and an inner diameter of 15 nM. Alpha-beta heterodimers associate head-to-tail to form protofilaments running lengthwise along the microtubule wall with the beta-tubulin subunit facing the microtubule plus end conferring a structural polarity. Microtubules usually have 13 protofilaments but different protofilament numbers can be found in some organisms and specialized cells. The cofactor is Mg(2+). Acetylation of alpha chains at Lys-40 stabilizes microtubules and affects affinity and processivity of microtubule motors. This modification has a role in multiple cellular functions, ranging from cell motility, cell cycle progression or cell differentiation to intracellular trafficking and signaling.

The protein localises to the cytoplasm. The protein resides in the cytoskeleton. The enzyme catalyses GTP + H2O = GDP + phosphate + H(+). Tubulin is the major constituent of microtubules, a cylinder consisting of laterally associated linear protofilaments composed of alpha- and beta-tubulin heterodimers. Microtubules grow by the addition of GTP-tubulin dimers to the microtubule end, where a stabilizing cap forms. Below the cap, tubulin dimers are in GDP-bound state, owing to GTPase activity of alpha-tubulin. The chain is Tubulin alpha-13 chain (TUBA13) from Naegleria pringsheimi (Amoeba).